We begin with the raw amino-acid sequence, 57 residues long: Mambalgin-3 (57 aa).

4 disulfides stabilise this stretch: C3/C19, C12/C37, C41/C49, and C50/C55.

It belongs to the three-finger toxin family. Short-chain subfamily. Mambalgin sub-subfamily. Expressed by the venom gland.

The protein localises to the secreted. Functionally, this three-finger toxin inhibits ASIC channels. It acts as a gating modifier toxin by decreasing the apparent proton sensitivity of activation and by slightly increasing the apparent proton sensitivity for inactivation. It binds more tightly to the closed state and to a much lesser extent the inactivated/desensitized state of ASIC1a. It interacts directly with the outside surface of the thumb domain of chicken ASIC1a (ASIC1a), but does not insert into the acidic pocket as suggested previously. This binding leads to relocation of the thumb domain that could disrupt the acidic pocket of cASIC1a. The peptide exerts both stimulatory and inhibitory effects on ASIC1a. It reversibly inhibits rASIC1a (IC(50)=17 nM), rASIC1b (IC(50)= 44 nM) and rASIC1a-rASIC2a (IC(50)=252 nM) channels. In vivo, it shows a potent naloxone-resistant analgesic effect against acute and inflammatory pain upon central and peripheral injection. In addition, it also has an opioid-independent effect on both thermal and mechanical inflammatory pain after systemic administration and is effective against neuropathic pain. The sequence is that of Mambalgin-3 from Dendroaspis angusticeps (Eastern green mamba).